A 396-amino-acid polypeptide reads, in one-letter code: Cathepsin E (396 aa).

An N-terminal signal peptide occupies residues 1-19 (MKTLLLLLLVLLELGEAQG). The propeptide at 20–53 (SLHRVPLRRHPSLKKKLRARSQLSEFWKSHNLDM) is activation peptide. A Peptidase A1 domain is found at 78-396 (YFGTISIGSP…NRVGLAPAVP (319 aa)). The N-linked (GlcNAc...) asparagine glycan is linked to Asn-90. Residue Asp-96 is part of the active site. 2 disulfide bridges follow: Cys-109–Cys-114 and Cys-272–Cys-276. Asp-281 is a catalytic residue. A disulfide bond links Cys-314 and Cys-351.

The protein belongs to the peptidase A1 family. In terms of assembly, homodimer; disulfide-linked. Post-translationally, glycosylated. The nature of the carbohydrate chain varies between cell types. In fibroblasts, the proenzyme contains a high mannose-type oligosaccharide, while the mature enzyme contains a complex-type oligosaccharide. In erythrocyte membranes, both the proenzyme and mature enzyme contain a complex-type oligosaccharide. Two forms are produced by autocatalytic cleavage, form I begins at Ile-54, form II begins at Thr-57. In terms of tissue distribution, expressed abundantly in the stomach, the Clara cells of the lung and activated B-lymphocytes, and at lower levels in lymph nodes, skin and spleen. Not expressed in resting B-lymphocytes.

It localises to the endosome. It carries out the reaction Similar to cathepsin D, but slightly broader specificity.. May have a role in immune function. Probably involved in the processing of antigenic peptides during MHC class II-mediated antigen presentation. May play a role in activation-induced lymphocyte depletion in the thymus, and in neuronal degeneration and glial cell activation in the brain. This is Cathepsin E (CTSE) from Homo sapiens (Human).